The sequence spans 323 residues: Sphingomyelinase D (323 aa).

Positions 1–20 (MISLLRLCSFLAAGSILVQG) are cleaved as a signal peptide. The active site involves histidine 59. 3 residues coordinate Mg(2+): glutamate 79, aspartate 81, and aspartate 127. The SMD-tail signature appears at 308–315 (ATNDDNPW).

It belongs to the sphingomyelinase D/phospholipase D family. It depends on Mg(2+) as a cofactor.

The protein localises to the secreted. The enzyme catalyses a sphingomyelin + H2O = an N-acylsphing-4-enine 1-phosphate + choline + H(+). Catalyzes the hydrolysis of sphingomyelin. Sphingomyelinases D are produced by some spider in their venoms, but also by arthropods such as ticks, or pathogenic bacteria and fungi. They might play a role in pathogenicity through different mechanisms, such as membrane destabilization and host cell penetration, but also pulmonary inflammation and cutaneous lesions. In Trichophyton rubrum (strain ATCC MYA-4607 / CBS 118892) (Athlete's foot fungus), this protein is Sphingomyelinase D.